The primary structure comprises 660 residues: Pro-secreted protein ORF2 (660 aa).

Positions 1–19 (MGPRPILLLFLMFLPMLLA) are cleaved as a signal peptide. 2 disordered regions span residues 20–43 (PPPGQPSGRRRGRRSGGSGGGFWG) and 66–127 (VTAA…DVDS). The Nuclear localization signal motif lies at 28–33 (RRRGRR). Low complexity predominate over residues 92–116 (QRPAAASRRRPTTAGAAPLTAVAPA). N-linked (GlcNAc...) asparagine; by host glycans are attached at residues Asn-137 and Asn-310. The interval 368–394 (IALTLFNLADTLLGGLPTELISSAGGQ) is particle formation. An N-linked (GlcNAc...) asparagine; by host glycan is attached at Asn-562. The interval 585–610 (TTSLGAGPVSISAVAVLGPHSALALL) is oligomerization.

It belongs to the hepevirus capsid protein family. As to quaternary structure, homodimer. Self-assembles to form the capsid. The capsid is dominated by dimers that define the 30 morphological units. Interacts with phosphorylated protein ORF3. Interacts with host TMEM134. Interacts with host ASGR1 and ASGR2; these interactions facilitate infection of host hepatocytes. In terms of processing, cleaved by host protease in the N-terminus. Post-translationally, N-glycosylated. Not N-glycosylated. The C-terminus of the capsid protein ORF2 is truncated in non-enveloped virions shedded in feces, probably due to host proteases.

The protein resides in the secreted. Its subcellular location is the virion. The protein localises to the host cytoplasm. It localises to the host endoplasmic reticulum. It is found in the host Golgi apparatus. The protein resides in the host cell surface. Functionally, plays a role in the inhibition of host antibody-mediated neutralization without blocking viral cell entry. Its function is as follows. Forms an icosahedral capsid with a T=1 symmetry and a 34 nm diameter. The capsid is composed of 60 copies linked to each other. Binds to the 5' end of the genomic RNA to mediate genome encapsidation. Binds to heparin surface proteoglycans (HSPGs) to mediate viral entry. Additionally, the interactions with host ASGR1 and ASGR2 facilitate viral infection of hepatocytes. Inhibits IFN production by blocking host TBK1-induced IRF3 phosphorylation. The nuclear form probably modulates host gene expression. This chain is Pro-secreted protein ORF2, found in Bandicota bengalensis (lesser bandicoot rat).